Reading from the N-terminus, the 136-residue chain is Probable 5-hydroxyisourate hydrolase ZK697.8 (136 aa).

The signal sequence occupies residues 1 to 19 (MIKFLLFLAIAAATVISNA). Positions 31, 69, and 133 each coordinate substrate.

It belongs to the transthyretin family. 5-hydroxyisourate hydrolase subfamily. In terms of assembly, homotetramer.

It carries out the reaction 5-hydroxyisourate + H2O = 5-hydroxy-2-oxo-4-ureido-2,5-dihydro-1H-imidazole-5-carboxylate + H(+). Functionally, catalyzes the hydrolysis of 5-hydroxyisourate (HIU) to 2-oxo-4-hydroxy-4-carboxy-5-ureidoimidazoline (OHCU). This Caenorhabditis elegans protein is Probable 5-hydroxyisourate hydrolase ZK697.8.